Reading from the N-terminus, the 105-residue chain is MKFLSLFFLALAGVAFAHDGGMGGMDMIKSYSILGAMIGLGIAAFGGAIGMGNAAAATITGTARNPGVGGKLLTTMFVAMAMIEAQVIYTLVFAIIAIYSNPFLS.

The next 3 membrane-spanning stretches (helical) occupy residues 3–23 (FLSL…GGMG), 32–52 (SILG…IGMG), and 78–98 (VAMA…IIAI).

The protein belongs to the ATPase C chain family. F-type ATPases have 2 components, F(1) - the catalytic core - and F(0) - the membrane proton channel. F(1) has five subunits: alpha(3), beta(3), gamma(1), delta(1), epsilon(1). F(0) has three main subunits: a(1), b(2) and c(10-14). The alpha and beta chains form an alternating ring which encloses part of the gamma chain. F(1) is attached to F(0) by a central stalk formed by the gamma and epsilon chains, while a peripheral stalk is formed by the delta and b chains.

The protein resides in the cell inner membrane. F(1)F(0) ATP synthase produces ATP from ADP in the presence of a proton or sodium gradient. F-type ATPases consist of two structural domains, F(1) containing the extramembraneous catalytic core and F(0) containing the membrane proton channel, linked together by a central stalk and a peripheral stalk. During catalysis, ATP synthesis in the catalytic domain of F(1) is coupled via a rotary mechanism of the central stalk subunits to proton translocation. Its function is as follows. Key component of the F(0) channel; it plays a direct role in translocation across the membrane. A homomeric c-ring of between 10-14 subunits forms the central stalk rotor element with the F(1) delta and epsilon subunits. This chain is ATP synthase subunit c, found in Helicobacter pylori (strain Shi470).